The following is a 122-amino-acid chain: SLIQFETLIMKVAKKSGMFSYSAYGCYCGWGGQGQPQDPTDRCCFVHDCCYGKVTGCDPKMDIYTYSEENGDIVCGGDDPCRKAVCECDKAAAICFRDNKDTYDWKKYWRFPTKNCQESVPC.

7 cysteine pairs are disulfide-bonded: Cys26/Cys116, Cys28/Cys44, Cys43/Cys95, Cys49/Cys122, Cys50/Cys88, Cys57/Cys81, and Cys75/Cys86. Ca(2+) is bound by residues Tyr27, Gly29, and Gly31. His47 is an active-site residue. Asp48 serves as a coordination point for Ca(2+). The active site involves Asp89.

Ca(2+) is required as a cofactor. In terms of tissue distribution, expressed by the venom gland.

The protein resides in the secreted. The catalysed reaction is a 1,2-diacyl-sn-glycero-3-phosphocholine + H2O = a 1-acyl-sn-glycero-3-phosphocholine + a fatty acid + H(+). Its function is as follows. Snake venom phospholipase A2 (PLA2) that shows a moderate inhibition of ADP-induced human platelet aggregation when tested on platelet rich plasma. Exhibits moderate hydrolytic activities and prefers the anionic micelles (dPPC with deoxycholate) to the zwitterionic micelles (dPPC with Triton X-100). PLA2 catalyzes the calcium-dependent hydrolysis of the 2-acyl groups in 3-sn-phosphoglycerides. This Trimeresurus stejnegeri (Chinese green tree viper) protein is Acidic phospholipase A2 CTs-A3.